The sequence spans 697 residues: Disintegrin and metalloproteinase domain-containing protein 26A (697 aa).

The signal sequence occupies residues 1–22 (MFLKFCLWTMFFFSAWSPIGHA). A propeptide spanning residues 23-187 (KYSSLLEVVT…NAPTLLQIPY (165 aa)) is cleaved from the precursor. N-linked (GlcNAc...) asparagine glycosylation occurs at N127. The Cysteine switch motif lies at 159-166 (MRCGLSEE). C161 contributes to the Zn(2+) binding site. Over 188-671 (ENWWTHHRFI…PPLPLSHSKW (484 aa)) the chain is Extracellular. Positions 195-385 (RFIEYFVVLD…TKRSCLYDIP (191 aa)) constitute a Peptidase M12B domain. N-linked (GlcNAc...) asparagine glycosylation occurs at N214. 3 disulfides stabilise this stretch: C305–C380, C344–C366, and C346–C351. Residue H329 participates in Zn(2+) binding. Residue E330 is part of the active site. H333 and H339 together coordinate Zn(2+). N-linked (GlcNAc...) asparagine glycans are attached at residues N365, N391, N464, N506, N531, and N573. Positions 392-478 (LTVCGNKVVE…ECPGDVYKAD (87 aa)) constitute a Disintegrin domain. Residues C450 and C470 are joined by a disulfide bond. An EGF-like domain is found at 616–649 (LVSNCSPQLYHMQGICNNKQHCHCGVTWKPPDCQ). Cystine bridges form between C620–C631 and C639–C648. A helical transmembrane segment spans residues 672 to 692 (IVYILIVLDVCIVIIIYLFSF). Residues 693–697 (YKLSK) are Cytoplasmic-facing.

Zn(2+) serves as cofactor. In terms of tissue distribution, expressed in sperm (at protein level). Expressed specifically in testis.

The protein resides in the membrane. In terms of biological role, sperm surface membrane protein that may be involved in spermatogenesis and fertilization. This Mus musculus (Mouse) protein is Disintegrin and metalloproteinase domain-containing protein 26A.